Reading from the N-terminus, the 437-residue chain is Ribosomal protein uS12 methylthiotransferase RimO (437 aa).

The MTTase N-terminal domain maps to 4-114 (PRIGFISLGC…VMNAVHEHLP (111 aa)). [4Fe-4S] cluster is bound by residues Cys13, Cys49, Cys78, Cys145, Cys149, and Cys152. The Radical SAM core domain occupies 131 to 368 (LTPRHYAYLK…MEVQERISAA (238 aa)). The TRAM domain maps to 371–437 (RTRIGRTETV…AHDLWARLAD (67 aa)).

This sequence belongs to the methylthiotransferase family. RimO subfamily. It depends on [4Fe-4S] cluster as a cofactor.

It is found in the cytoplasm. The enzyme catalyses L-aspartate(89)-[ribosomal protein uS12]-hydrogen + (sulfur carrier)-SH + AH2 + 2 S-adenosyl-L-methionine = 3-methylsulfanyl-L-aspartate(89)-[ribosomal protein uS12]-hydrogen + (sulfur carrier)-H + 5'-deoxyadenosine + L-methionine + A + S-adenosyl-L-homocysteine + 2 H(+). Functionally, catalyzes the methylthiolation of an aspartic acid residue of ribosomal protein uS12. The sequence is that of Ribosomal protein uS12 methylthiotransferase RimO from Methylococcus capsulatus (strain ATCC 33009 / NCIMB 11132 / Bath).